A 201-amino-acid chain; its full sequence is Hydroxymethylphosphonate dioxygenase (201 aa).

Fe cation contacts are provided by histidine 47, histidine 71, aspartate 72, histidine 94, histidine 117, and aspartate 174.

It depends on Fe(2+) as a cofactor.

It carries out the reaction hydroxymethylphosphonate + O2 = formate + phosphate + 2 H(+). It catalyses the reaction (1R)-(2-amino-1-hydroxyethyl)phosphonate + O2 = glycine + phosphate + 2 H(+). The catalysed reaction is (1R)-(1-hydroxyethyl)phosphonate + O2 = acetate + phosphate + 2 H(+). Its function is as follows. Part of an oxidative pathway for utilization of methylphosphonic acid as a phosphate source. Catalyzes the oxidation of hydroxymethylphosphonic acid to produce formate and phosphate. Can also use (1R)-(2-amino-1-hydroxyethyl)phosphonic acid and (R)-1-hydroxyethylphosphonic acid with similar catalytic efficiency. The chain is Hydroxymethylphosphonate dioxygenase from Gimesia maris (strain ATCC 29201 / DSM 8797 / 534-30) (Planctomyces maris).